An 890-amino-acid polypeptide reads, in one-letter code: DNA mismatch repair protein MutS (890 aa).

A compositionally biased stretch (basic and acidic residues) spans 1-13 (MDKGINLQNDKEP). A disordered region spans residues 1–23 (MDKGINLQNDKEPSPMAEGNPAD). 649–656 (GPNMGGKS) lines the ATP pocket.

This sequence belongs to the DNA mismatch repair MutS family.

Functionally, this protein is involved in the repair of mismatches in DNA. It is possible that it carries out the mismatch recognition step. This protein has a weak ATPase activity. The protein is DNA mismatch repair protein MutS of Paracidovorax citrulli (strain AAC00-1) (Acidovorax citrulli).